Here is a 651-residue protein sequence, read N- to C-terminus: Far upstream element-binding protein 1 (651 aa).

Disordered regions lie at residues 1-24 (MADY…GVVN) and 40-92 (KIGG…HQQQ). Ala2 is modified (N-acetylalanine). A phosphoserine mark is found at Ser48 and Ser51. Residues 61 to 73 (RPLEDGDQPDAKK) are compositionally biased toward basic and acidic residues. KH domains follow at residues 96–160 (VMTE…KRLL), 181–247 (NAVQ…KEMV), and 271–335 (NEGI…AEII). Ser136 is modified (phosphoserine). Thr149 is modified (phosphothreonine). Omega-N-methylarginine occurs at positions 317, 355, 357, and 359. One can recognise a KH 4 domain in the interval 372 to 439 (LQEFNFIVPT…QQIDYARQLI (68 aa)). Ser411 is subject to Phosphoserine. Thr428 carries the post-translational modification Phosphothreonine. 3 disordered regions span residues 443 to 528 (IGGP…GADP), 545 to 574 (AQPP…APAG), and 625 to 651 (TSPQ…HHLY). Residues 464–501 (PHGPPGPPGPGTPMGPYNPAPYNPGPPGPAPHGPPAPY) are compositionally biased toward pro residues. Composition is skewed to low complexity over residues 514–528 (QQQA…GADP) and 552–574 (PAGA…APAG). Residue Ser626 is modified to Phosphoserine.

As to quaternary structure, found in a complex with PUF60 and far upstream element (FUSE) DNA segment. Interacts with PUF60 and JTV1. Post-translationally, ubiquitinated. This targets the protein for proteasome-mediated degradation.

It is found in the nucleus. Functionally, regulates MYC expression by binding to a single-stranded far-upstream element (FUSE) upstream of the MYC promoter. May act both as activator and repressor of transcription. The chain is Far upstream element-binding protein 1 (Fubp1) from Mus musculus (Mouse).